A 58-amino-acid polypeptide reads, in one-letter code: Arabinogalactan protein 21 (58 aa).

Residues Met-1 to Ala-24 form the signal peptide. Pro-30, Pro-32, and Pro-34 each carry 4-hydroxyproline. O-linked (Ara...) hydroxyproline glycans are attached at residues Pro-30, Pro-32, and Pro-34. Ser-36 carries the GPI-anchor amidated serine lipid modification. The propeptide at Asp-37 to Phe-58 is removed in mature form.

The protein belongs to the AG-peptide AGP family. Contains 4-hydroxyproline; hydroxylated on Pro-30, Pro-32 and Pro-34. In terms of processing, O-glycosylated on hydroxyprolines; noncontiguous hydroxylproline residues are glycosylated with arabinogalactan.

It localises to the cell membrane. Its function is as follows. Proteoglycan that seems to be implicated in diverse developmental roles such as differentiation, cell-cell recognition, embryogenesis and programmed cell death. This Arabidopsis thaliana (Mouse-ear cress) protein is Arabinogalactan protein 21.